A 311-amino-acid polypeptide reads, in one-letter code: Protoheme IX farnesyltransferase (311 aa).

8 helical membrane passes run 39 to 59, 61 to 81, 111 to 131, 133 to 153, 162 to 182, 187 to 207, 246 to 266, and 287 to 307; these read LLAM…PIGE, LPEI…AGAF, ALVL…VASP, AALF…MWSK, IGSV…SGDL, IIGL…AIAI, FFFV…SLIW, and FVFS…FSLL.

The protein belongs to the UbiA prenyltransferase family. Protoheme IX farnesyltransferase subfamily. Interacts with CtaA.

The protein localises to the cell membrane. The catalysed reaction is heme b + (2E,6E)-farnesyl diphosphate + H2O = Fe(II)-heme o + diphosphate. The protein operates within porphyrin-containing compound metabolism; heme O biosynthesis; heme O from protoheme: step 1/1. Its function is as follows. Converts heme B (protoheme IX) to heme O by substitution of the vinyl group on carbon 2 of heme B porphyrin ring with a hydroxyethyl farnesyl side group. In Shouchella clausii (strain KSM-K16) (Alkalihalobacillus clausii), this protein is Protoheme IX farnesyltransferase.